The sequence spans 250 residues: Indole-3-glycerol phosphate synthase (250 aa).

It belongs to the TrpC family.

The catalysed reaction is 1-(2-carboxyphenylamino)-1-deoxy-D-ribulose 5-phosphate + H(+) = (1S,2R)-1-C-(indol-3-yl)glycerol 3-phosphate + CO2 + H2O. Its pathway is amino-acid biosynthesis; L-tryptophan biosynthesis; L-tryptophan from chorismate: step 4/5. The protein is Indole-3-glycerol phosphate synthase of Metallosphaera sedula (strain ATCC 51363 / DSM 5348 / JCM 9185 / NBRC 15509 / TH2).